The following is a 264-amino-acid chain: Pimeloyl-[acyl-carrier protein] methyl ester esterase (264 aa).

The AB hydrolase-1 domain occupies 23–244; it reads LVMLHGWGVN…MLAKASHAPF (222 aa). Substrate is bound by residues tryptophan 29, 87 to 88, and 150 to 154; these read SL and FLAIQ. Residue serine 87 is the Nucleophile of the active site. Residues aspartate 214 and histidine 241 contribute to the active site. Histidine 241 contributes to the substrate binding site.

The protein belongs to the AB hydrolase superfamily. Carboxylesterase BioH family. Monomer.

The protein localises to the cytoplasm. The enzyme catalyses 6-carboxyhexanoyl-[ACP] methyl ester + H2O = 6-carboxyhexanoyl-[ACP] + methanol + H(+). It participates in cofactor biosynthesis; biotin biosynthesis. The physiological role of BioH is to remove the methyl group introduced by BioC when the pimeloyl moiety is complete. It allows to synthesize pimeloyl-ACP via the fatty acid synthetic pathway through the hydrolysis of the ester bonds of pimeloyl-ACP esters. This is Pimeloyl-[acyl-carrier protein] methyl ester esterase from Shewanella sp. (strain MR-7).